The primary structure comprises 258 residues: Type III pantothenate kinase (258 aa).

Asp6 to Val13 provides a ligand contact to ATP. Substrate-binding positions include Tyr100 and Gly107–Arg110. Asp109 (proton acceptor) is an active-site residue. Residue Asp129 coordinates K(+). ATP is bound at residue Thr132. Thr184 serves as a coordination point for substrate.

The protein belongs to the type III pantothenate kinase family. In terms of assembly, homodimer. Requires NH4(+) as cofactor. K(+) is required as a cofactor.

The protein resides in the cytoplasm. The catalysed reaction is (R)-pantothenate + ATP = (R)-4'-phosphopantothenate + ADP + H(+). The protein operates within cofactor biosynthesis; coenzyme A biosynthesis; CoA from (R)-pantothenate: step 1/5. Functionally, catalyzes the phosphorylation of pantothenate (Pan), the first step in CoA biosynthesis. This chain is Type III pantothenate kinase, found in Clostridium botulinum (strain Kyoto / Type A2).